Here is a 183-residue protein sequence, read N- to C-terminus: Dual-action ribosomal maturation protein DarP (183 aa).

This sequence belongs to the DarP family.

It localises to the cytoplasm. Functionally, member of a network of 50S ribosomal subunit biogenesis factors which assembles along the 30S-50S interface, preventing incorrect 23S rRNA structures from forming. Promotes peptidyl transferase center (PTC) maturation. The chain is Dual-action ribosomal maturation protein DarP from Escherichia coli O7:K1 (strain IAI39 / ExPEC).